A 233-amino-acid chain; its full sequence is Large ribosomal subunit protein uL22m (233 aa).

This sequence belongs to the universal ribosomal protein uL22 family. As to quaternary structure, component of the mitochondrial ribosome large subunit (39S) which comprises a 16S rRNA and about 50 distinct proteins.

Its subcellular location is the mitochondrion. This is Large ribosomal subunit protein uL22m (mRpL22) from Drosophila pseudoobscura pseudoobscura (Fruit fly).